The sequence spans 421 residues: Probable sugar-binding periplasmic protein (421 aa).

An N-terminal signal peptide occupies residues 1-27 (MHKLLKLAAMGTAACALLAGMAPVANA).

It belongs to the bacterial solute-binding protein 1 family.

Its subcellular location is the periplasm. In terms of biological role, part of a binding-protein-dependent transport system for a sugar. This chain is Probable sugar-binding periplasmic protein, found in Brucella suis biovar 1 (strain 1330).